The sequence spans 281 residues: Para-Rep C1 (281 aa).

The region spanning 3–97 (TLQGTFWCFT…VAGPWTYGEL (95 aa)) is the CRESS-DNA virus Rep endonuclease domain. Residues 10 to 13 (CFTL) carry the RCR-1 motif. A divalent metal cation contacts are provided by Glu-36 and His-42. The short motif at 42-44 (HLQ) is the RCR-2 element. The Nuclear localization signal signature appears at 51-71 (KRSTLKMMKELLPGAHLEVSK). The For DNA cleavage activity role is filled by Tyr-80. An RCR-3 motif is present at residues 80 to 83 (YAMK). Glu-85 is a binding site for a divalent metal cation. A Nuclear localization signal motif is present at residues 97–103 (LLKKGSN). Position 173–181 (173–181 (GPQGGEGKT)) interacts with ATP.

It belongs to the nanoviridea/circoviridae replication-associated protein family. As to quaternary structure, homooligomer (Potential). Rep binds to repeated DNA motifs (iterons). It depends on Mg(2+) as a cofactor. Requires Mn(2+) as cofactor.

The protein resides in the host nucleus. It catalyses the reaction ATP + H2O = ADP + phosphate + H(+). Its function is as follows. Initiates and terminates the replication only of its own subviral DNA molecule. The closed circular ssDNA genome is first converted to a superhelical dsDNA. Rep binds a specific hairpin at the genome origin of replication. Introduces an endonucleolytic nick within the intergenic region of the genome, thereby initiating the rolling circle replication (RCR). Following cleavage, binds covalently to the 5'-phosphate of DNA as a tyrosyl ester. The cleavage gives rise to a free 3'-OH that serves as a primer for the cellular DNA polymerase. The polymerase synthesizes the (+) strand DNA by rolling circle mechanism. After one round of replication, a Rep-catalyzed nucleotidyl transfer reaction releases a circular single-stranded virus genome, thereby terminating the replication. Displays origin-specific DNA cleavage, nucleotidyl transferase, ATPase and helicase activities. The protein is Para-Rep C1 (C1) of Milk vetch dwarf C1 alphasatellite (MVDC1A).